The sequence spans 263 residues: MGNIKTLLENRFKKPTPDKMESLAKKRLEGELSPFLNGFTNPKLSSQEEARFRQLLEEYSFSKEISHNDLQQLCHLSAQVKQIHHQAILLHGERIKKVRELLKTYREGVFSAWLLLTYGNRQTPYNFLVYYELFSALPDTLKLELERLPRQAVYTLASREGSQEKKEEIIRNYQGETRGELLEIIRREFPLLPTDRRQSSLAQQAFSFFAKGTKLLQRCTDISQEELLSLEKLIKKLQKVTTNLLSNTKVSLNDDETQNSRNR.

The protein belongs to the UPF0137 (pGP6-D) family.

The polypeptide is Virulence plasmid protein pGP6-D-related protein (Chlamydia trachomatis serovar D (strain ATCC VR-885 / DSM 19411 / UW-3/Cx)).